Consider the following 409-residue polypeptide: L-cysteine:1D-myo-inositol 2-amino-2-deoxy-alpha-D-glucopyranoside ligase (409 aa).

Cys43 is a Zn(2+) binding site. L-cysteinyl-5'-AMP-binding positions include 43–46, Thr58, and 81–83; these read CGIT and NVT. Residues 45-55 carry the 'HIGH' region motif; that stretch reads ITPYDATHMGH. Residues 183 to 188 carry the 'ERGGDP' region motif; that stretch reads ERGGDP. Trp224 contributes to the L-cysteinyl-5'-AMP binding site. Cys228 contributes to the Zn(2+) binding site. 246 to 248 serves as a coordination point for L-cysteinyl-5'-AMP; the sequence is GSD. Residue His253 coordinates Zn(2+). An L-cysteinyl-5'-AMP-binding site is contributed by Val280. The 'KMSKS' region signature appears at 286–290; sequence KMSKS.

It belongs to the class-I aminoacyl-tRNA synthetase family. MshC subfamily. Monomer. It depends on Zn(2+) as a cofactor.

It catalyses the reaction 1D-myo-inositol 2-amino-2-deoxy-alpha-D-glucopyranoside + L-cysteine + ATP = 1D-myo-inositol 2-(L-cysteinylamino)-2-deoxy-alpha-D-glucopyranoside + AMP + diphosphate + H(+). Its function is as follows. Catalyzes the ATP-dependent condensation of GlcN-Ins and L-cysteine to form L-Cys-GlcN-Ins. The chain is L-cysteine:1D-myo-inositol 2-amino-2-deoxy-alpha-D-glucopyranoside ligase from Streptomyces scabiei (strain 87.22).